Here is a 486-residue protein sequence, read N- to C-terminus: UDP-N-acetylmuramate--L-alanine ligase (486 aa).

Residue 129–135 (GTHGKTT) coordinates ATP.

Belongs to the MurCDEF family.

Its subcellular location is the cytoplasm. The catalysed reaction is UDP-N-acetyl-alpha-D-muramate + L-alanine + ATP = UDP-N-acetyl-alpha-D-muramoyl-L-alanine + ADP + phosphate + H(+). Its pathway is cell wall biogenesis; peptidoglycan biosynthesis. Its function is as follows. Cell wall formation. The protein is UDP-N-acetylmuramate--L-alanine ligase of Vibrio cholerae serotype O1 (strain ATCC 39315 / El Tor Inaba N16961).